The primary structure comprises 136 residues: Large ribosomal subunit protein eL27 (136 aa).

The region spanning 5-40 is the KOW domain; it reads MKPGKVVMVLAGRYAGRKAVIVKNIDDGTADRPYSH.

Belongs to the eukaryotic ribosomal protein eL27 family. In terms of assembly, component of the large ribosomal subunit.

It localises to the cytoplasm. The protein resides in the cytosol. It is found in the rough endoplasmic reticulum. Functionally, component of the large ribosomal subunit. The chain is Large ribosomal subunit protein eL27 (rpl27) from Ictalurus punctatus (Channel catfish).